A 930-amino-acid polypeptide reads, in one-letter code: MTSRQEGASSHGSRRSSRHVGSFIIDREIGKGSFAQVYMGWHKESKAAVAIKSVELERLNKKLKENLYGEIQILKTLRHPHIVALHDCVESSTHINLIMEYCELGDLSLFIKKRDKLITHPATHDMARKYPSAPNSGLHEVVIRHFLKQLSSALEFLRAKNYVHRDVKPQNLLLLPSQAFREERALPIMEASQDSLIPISGLASLPMLKLADFGFARVLPSTSLADTLCGSPLYMAPEILRYERYDAKADLWSVGTVLYEMITGRPPFRARNHVELLRKIEAAEDVIKFPREVSVTPDLKALVRSLLKRSPVERLSFENFFAHHVVTGDILGLVEDDIPKPPKRELETIRQGEALPSSPRVQMARQLSSDPRDTRSSPKSPRSSPRSSTVNSSADAAPRRQSQNAERRLSISSHNSGQGLGIQRPAPPIQSHTAPNHPRAADRSGREPQPSSLRVARQPSDVSLTEEEKAAQDVMFERDYVVVERRHVEVNALADELAANEKLGQNNSSAKSSPLQRRYTQQGSATSTTGAIPTPASRTALVAQGRAGQDRRSSYEKALSASPGSASSAISKAIQDASLRLFGYKVNTMRQKGSSPPLYQPFPAYPTPTSAGLLSDGKGSQVSDEDAKAAQAIEEFATRSDCVYGFAEVKYKQLLPMAPSMDYGLGGVSPDKGTSEEDGLTVDATVALSEEALVLYVKSLTLLARAMDIASLWWSKKTRAESSVVSQTLVQRINAVVQWVRQRFNEVLEKSEVVRLKLTEAQKLLPEDHPSNPAHQGEDSIASSAVGAKQVYLTPGISAEKLMYDRALEMSRAAAIDEVTNENLPGCEISYLTAIRMLEAVLDSDDEATARNISSGKEIAKDATQEGSDLDTEEAAHVRKMITMITGRLNMVRKKQQMIAEANNQAKHVSAMRRLSGDVTPRSVPSYGST.

Residues F23 to V326 form the Protein kinase domain. ATP is bound by residues I29–V37 and K52. The Proton acceptor role is filled by D166. 4 disordered regions span residues D336–E468, G504–P563, I853–E874, and N904–T930. A compositionally biased stretch (basic and acidic residues) spans D337–R350. Positions S377–S393 are enriched in low complexity. Composition is skewed to polar residues over residues R400 to G417 and G504 to A531. The ATG13-binding stretch occupies residues A629 to Q897.

It belongs to the protein kinase superfamily. Ser/Thr protein kinase family. APG1/unc-51/ULK1 subfamily. Homodimer. Dimerization requires the presence of ATG13. Forms a ternary complex with ATG13 and ATG17.

The protein localises to the cytoplasm. The protein resides in the preautophagosomal structure membrane. It carries out the reaction L-seryl-[protein] + ATP = O-phospho-L-seryl-[protein] + ADP + H(+). It catalyses the reaction L-threonyl-[protein] + ATP = O-phospho-L-threonyl-[protein] + ADP + H(+). Serine/threonine protein kinase involved in the cytoplasm to vacuole transport (Cvt) and found to be essential in autophagy, where it is required for the formation of autophagosomes. Involved in the clearance of protein aggregates which cannot be efficiently cleared by the proteasome. Required for selective autophagic degradation of the nucleus (nucleophagy) as well as for mitophagy which contributes to regulate mitochondrial quantity and quality by eliminating the mitochondria to a basal level to fulfill cellular energy requirements and preventing excess ROS production. Also involved in endoplasmic reticulum-specific autophagic process, in selective removal of ER-associated degradation (ERAD) substrates. Plays a key role in ATG9 and ATG23 cycling through the pre-autophagosomal structure and is necessary to promote ATG18 binding to ATG9 through phosphorylation of ATG9. Catalyzes phosphorylation of ATG4, decreasing the interaction between ATG4 and ATG8 and impairing deconjugation of PE-conjugated forms of ATG8. Contributes to conidiation by regulating the conidial levels of the conidiation-related protein CP15 and mediates fungal oxidation resistance by controlling total superoxide dismutase (SOD) activity. This is Serine/threonine-protein kinase ATG1 from Beauveria bassiana (strain ARSEF 2860) (White muscardine disease fungus).